We begin with the raw amino-acid sequence, 105 residues long: ATP synthase subunit c (105 aa).

The next 2 membrane-spanning stretches (helical) occupy residues 32–52 (SILG…IGMG) and 78–98 (VAMA…IIAI).

Belongs to the ATPase C chain family. As to quaternary structure, F-type ATPases have 2 components, F(1) - the catalytic core - and F(0) - the membrane proton channel. F(1) has five subunits: alpha(3), beta(3), gamma(1), delta(1), epsilon(1). F(0) has three main subunits: a(1), b(2) and c(10-14). The alpha and beta chains form an alternating ring which encloses part of the gamma chain. F(1) is attached to F(0) by a central stalk formed by the gamma and epsilon chains, while a peripheral stalk is formed by the delta and b chains.

Its subcellular location is the cell inner membrane. In terms of biological role, f(1)F(0) ATP synthase produces ATP from ADP in the presence of a proton or sodium gradient. F-type ATPases consist of two structural domains, F(1) containing the extramembraneous catalytic core and F(0) containing the membrane proton channel, linked together by a central stalk and a peripheral stalk. During catalysis, ATP synthesis in the catalytic domain of F(1) is coupled via a rotary mechanism of the central stalk subunits to proton translocation. Key component of the F(0) channel; it plays a direct role in translocation across the membrane. A homomeric c-ring of between 10-14 subunits forms the central stalk rotor element with the F(1) delta and epsilon subunits. In Helicobacter pylori (strain ATCC 700392 / 26695) (Campylobacter pylori), this protein is ATP synthase subunit c.